Reading from the N-terminus, the 263-residue chain is ATP synthase subunit b 2 (263 aa).

The helical transmembrane segment at 2–22 (LIDPLTVVAQIINFLILVALL) threads the bilayer.

It belongs to the ATPase B chain family. F-type ATPases have 2 components, F(1) - the catalytic core - and F(0) - the membrane proton channel. F(1) has five subunits: alpha(3), beta(3), gamma(1), delta(1), epsilon(1). F(0) has four main subunits: a(1), b(1), b'(1) and c(10-14). The alpha and beta chains form an alternating ring which encloses part of the gamma chain. F(1) is attached to F(0) by a central stalk formed by the gamma and epsilon chains, while a peripheral stalk is formed by the delta, b and b' chains.

It is found in the cellular thylakoid membrane. Functionally, f(1)F(0) ATP synthase produces ATP from ADP in the presence of a proton or sodium gradient. F-type ATPases consist of two structural domains, F(1) containing the extramembraneous catalytic core and F(0) containing the membrane proton channel, linked together by a central stalk and a peripheral stalk. During catalysis, ATP synthesis in the catalytic domain of F(1) is coupled via a rotary mechanism of the central stalk subunits to proton translocation. Component of the F(0) channel, it forms part of the peripheral stalk, linking F(1) to F(0). The protein is ATP synthase subunit b 2 of Acaryochloris marina (strain MBIC 11017).